Reading from the N-terminus, the 439-residue chain is Phthalate 4,5-dioxygenase oxygenase subunit (439 aa).

Residues tryptophan 27–alanine 134 form the Rieske domain. [2Fe-2S] cluster-binding residues include cysteine 70, histidine 72, cysteine 89, and histidine 92. Residues histidine 181 and histidine 186 each contribute to the Fe cation site.

The protein belongs to the bacterial ring-hydroxylating dioxygenase alpha subunit family. In terms of assembly, this dioxygenase system consists of two proteins: phthalate oxygenase and phthalate oxygenase reductase. It depends on [2Fe-2S] cluster as a cofactor. The cofactor is Fe cation.

It carries out the reaction phthalate + NADH + O2 + H(+) = cis-4,5-dihydroxycyclohexa-2,6-diene-1,2-dicarboxylate + NAD(+). The protein operates within xenobiotic degradation; phthalate degradation; 3,4-dihydroxybenzoate from phthalate: step 1/3. The chain is Phthalate 4,5-dioxygenase oxygenase subunit (pht3) from Pseudomonas putida (Arthrobacter siderocapsulatus).